Here is a 332-residue protein sequence, read N- to C-terminus: MAVFTAVSDSDLAQWMRHYELGDVLAFRGIPSGIENSNFFLTTTRGEYVLTIFEKLTAEQLPFYLDLMRHLASHRVPVPDPVPRDDGALFGLLHGKPAAIVTKLDGAAELAPGVEHCIEVGQMLARMHLAGRDYARQQPNLRSLPWWQENVPAIVPFISDAQRALLESELAHQAAFFASDDYAALPSGPCHCDLFRDNVLFAHAAPGTGHDVRLGGFFDFYFAGCDKWLFDVAVTVNDWCVDLATGVLDTARADALLRAYQTVRPFTAEERRHWSDMLRAGAYRFWVSRLYDFYLPRAAEMLKPHDPGHFERILRERIAHTPALPETHTACN.

The protein belongs to the pseudomonas-type ThrB family.

It catalyses the reaction L-homoserine + ATP = O-phospho-L-homoserine + ADP + H(+). It functions in the pathway amino-acid biosynthesis; L-threonine biosynthesis; L-threonine from L-aspartate: step 4/5. The protein is Homoserine kinase of Burkholderia vietnamiensis (strain G4 / LMG 22486) (Burkholderia cepacia (strain R1808)).